The sequence spans 238 residues: Uridylate kinase (238 aa).

10–13 provides a ligand contact to ATP; sequence KFSG. An involved in allosteric activation by GTP region spans residues 18–23; sequence GDSGFG. Gly-52 lines the UMP pocket. Residues Gly-53 and Arg-57 each contribute to the ATP site. UMP is bound by residues Asp-73 and 134–141; that span reads TGNPFFTT. Residues Thr-161, Tyr-167, and Asp-170 each contribute to the ATP site.

It belongs to the UMP kinase family. As to quaternary structure, homohexamer.

It is found in the cytoplasm. It carries out the reaction UMP + ATP = UDP + ADP. It participates in pyrimidine metabolism; CTP biosynthesis via de novo pathway; UDP from UMP (UMPK route): step 1/1. Allosterically activated by GTP. Inhibited by UTP. Catalyzes the reversible phosphorylation of UMP to UDP. This is Uridylate kinase from Campylobacter curvus (strain 525.92).